The sequence spans 187 residues: Lysozyme 3 (187 aa).

The signal sequence occupies residues 1–18 (MNGLFLFCVATTAALAYG). Residues 68–183 (TGIVSQQCLQ…WSHVHAQGCS (116 aa)) form the I-type lysozyme domain. 6 disulfides stabilise this stretch: cysteine 75–cysteine 151, cysteine 80–cysteine 86, cysteine 91–cysteine 100, cysteine 113–cysteine 133, cysteine 123–cysteine 129, and cysteine 147–cysteine 165. Glutamate 83 serves as the catalytic Proton donor. The active-site Nucleophile is the aspartate 94. 106–112 (KEGYWHD) contacts substrate. Substrate is bound by residues tyrosine 137 and 158–160 (HNG).

As to expression, highest levels of expression detected in the digestive glands. Lower levels in the mantle, labial palps, gills and style-midgut sac, and lowest levels detected in the hemocytes. Not detected in the gonads.

The protein resides in the secreted. The enzyme catalyses Hydrolysis of (1-&gt;4)-beta-linkages between N-acetylmuramic acid and N-acetyl-D-glucosamine residues in a peptidoglycan and between N-acetyl-D-glucosamine residues in chitodextrins.. Has antibacterial activity against the Gram-negative bacterium E.coli. No antibacterial activity detected against the Gram-negative bacterium V.vulnificus. In Crassostrea virginica (Eastern oyster), this protein is Lysozyme 3.